Consider the following 686-residue polypeptide: Acyl-CoA synthetase short-chain family member 3, mitochondrial (686 aa).

Residues 1-29 (MKPSWLQCRKVTSAGGLGGPLPGSSPARG) constitute a mitochondrion transit peptide. A CoA-binding site is contributed by 227-230 (EPGR). ATP contacts are provided by residues 425–427 (GER) and 446–451 (DHWWQT). Position 518 is an N6-succinyllysine (Lys518). Position 524 is an N6-acetyllysine (Lys524). ATP is bound by residues Asp539, Arg554, and Arg565. Arg624 provides a ligand contact to CoA.

It belongs to the ATP-dependent AMP-binding enzyme family.

It is found in the mitochondrion matrix. It carries out the reaction acetate + ATP + CoA = acetyl-CoA + AMP + diphosphate. It catalyses the reaction propanoate + ATP + CoA = propanoyl-CoA + AMP + diphosphate. The catalysed reaction is butanoate + ATP + CoA = butanoyl-CoA + AMP + diphosphate. In terms of biological role, catalyzes the synthesis of acetyl-CoA from short-chain fatty acids. Propionate is the preferred substrate. Can utilize acetate and butyrate with a much lower affinity. The polypeptide is Acyl-CoA synthetase short-chain family member 3, mitochondrial (ACSS3) (Homo sapiens (Human)).